A 496-amino-acid polypeptide reads, in one-letter code: Ankyrin repeat domain-containing protein 53 (496 aa).

Over residues 1–15 (MASAGSTARRAGSGS) the composition is skewed to low complexity. Positions 1–66 (MASAGSTARR…RPSEESDQTT (66 aa)) are disordered. The span at 51-60 (AESKQPRPSE) shows a compositional bias: basic and acidic residues. ANK repeat units follow at residues 105 to 135 (KGFT…PVNL), 139 to 172 (NSQT…ALNA), and 176 to 205 (NGCT…NVHA). The segment at 292–320 (LVSNTKQARATALSKTPEQRGSQCSSSFH) is disordered.

In terms of assembly, interacts with PSRC1; recruited by PSRC1 to the spindle during mitosis. Post-translationally, phosphorylated during mitosis.

The protein resides in the cytoplasm. It is found in the cytoskeleton. It localises to the spindle. Its subcellular location is the spindle pole. Its function is as follows. Required for normal progression through mitosis. Involved in chromosome alignment and cytokinesis via regulation of microtubules polymerization. This Macaca fascicularis (Crab-eating macaque) protein is Ankyrin repeat domain-containing protein 53 (ANKRD53).